Here is a 663-residue protein sequence, read N- to C-terminus: MAAAAAAASLSVSDAAAKLPKPGGQVQRRRDRDRPRVDAAACTRDSRRPTRERCSTTVSLAATATATTATPVRAPVRTRAPMGQRKGADIVVEALERCGVRDVFEYPGGASMEIHQALTRSPVIRNHLLRHEQGEAFAASGYARSSGRPGVCVATSGPGATNLVSALADAHLDSVPLVAITGQAPRRMIGTDAFQETPIVEFTRSITKHNYLILDVDDIPRVINEAFFLASTGRPGPVLVDIPKDIQQQMAVPSWDAPMRLPGYISRLPKPPAANLLDEVIRLVGDAERPVLYVGGGCSASGYELRRFVELTGIPVTTTLMGIGNFPSDDPLSLRMLGMHGTVYANYAVDNADLLLALGVRFDDRVTGKVEAFASRAKIVHVDIDPSELGKNKQPHVSICADVKLALQGMNAMLEEQSAAAARKNLDFSAWRSELEKKKVEFPLGYRTFGEEIPPQYAIQVLDEVTNGEAIVATGVGQHQMWATQHYTYRRPRQWLSSAGLGAMGFGLPAAAGAAVANPGATVVDIDGDGSLLMNIQELAMVRVEDLPVKVMVLNNQHLGMVVQWEDRFYDANRAHTYLGNPAANGGGEVYPDFVTIAGGFGIPAARVTRKGEVRAAVEEMMAAPGPYLLDVVVPHQEHVLPMIPSNGAFKDIIVDGDGRSSY.

The segment covering 1–26 (MAAAAAAASLSVSDAAAKLPKPGGQV) has biased composition (low complexity). A disordered region spans residues 1–56 (MAAAAAAASLSVSDAAAKLPKPGGQVQRRRDRDRPRVDAAACTRDSRRPTRERCST). A chloroplast-targeting transit peptide spans 1-79 (MAAAAAAASL…TPVRAPVRTR (79 aa)). Composition is skewed to basic and acidic residues over residues 28–37 (RRRDRDRPRV) and 44–54 (RDSRRPTRERC). Residue E132 coordinates thiamine diphosphate. Cysteines 152 and 298 form a disulfide. FAD-binding positions include R234, 340–361 (HGTV…LGVR), and 383–402 (DIDP…ICAD). Residues 478–558 (QHQMWATQHY…VKVMVLNNQH (81 aa)) are thiamine pyrophosphate binding. Mg(2+)-binding residues include D529 and N556.

This sequence belongs to the TPP enzyme family. Mg(2+) is required as a cofactor. The cofactor is thiamine diphosphate.

It is found in the plastid. It localises to the chloroplast. It catalyses the reaction 2 pyruvate + H(+) = (2S)-2-acetolactate + CO2. It participates in amino-acid biosynthesis; L-isoleucine biosynthesis; L-isoleucine from 2-oxobutanoate: step 1/4. The protein operates within amino-acid biosynthesis; L-valine biosynthesis; L-valine from pyruvate: step 1/4. This is Probable acetolactate synthase 2, chloroplastic (ALS2) from Oryza sativa subsp. japonica (Rice).